A 329-amino-acid chain; its full sequence is Serine dehydratase-like (329 aa).

M1 bears the N-acetylmethionine mark. Position 48 is an N6-(pyridoxal phosphate)lysine (K48).

This sequence belongs to the serine/threonine dehydratase family. As to quaternary structure, monomer. Homodimer. Requires pyridoxal 5'-phosphate as cofactor. Expressed in lung cancer cell lines.

The enzyme catalyses L-serine = pyruvate + NH4(+). It carries out the reaction L-threonine = 2-oxobutanoate + NH4(+). The catalysed reaction is L-glutamate = D-glutamate. Its function is as follows. Catalyzes the pyridoxal-phosphate-dependent dehydrative deamination of L-threonine and L-serine to ammonia and alpha-ketobutyrate and pyruvate, respectively. Also exhibits racemase activity towards L-glutamate and D-glutamate. This chain is Serine dehydratase-like (SDSL), found in Homo sapiens (Human).